The primary structure comprises 725 residues: G-quartet DNA-binding protein TGP1 (725 aa).

The Nuclear localization signal motif lies at 241 to 258 (KKALTDVLQIHEKKERVH). Disordered stretches follow at residues 252-284 (EKKE…LQET) and 468-614 (EIHK…GKRG). A compositionally biased stretch (basic residues) spans 256-277 (RVHKQQNKNKNPRNAHKNHNRQ). Residues 468–478 (EIHKIDRERKR) show a composition bias toward basic and acidic residues. The span at 517 to 544 (NKYKNTSVQNNNNNKNQQRSQSQNQRPP) shows a compositional bias: low complexity. Basic and acidic residues predominate over residues 545–564 (RNYDNRQGGENRNNRQRNEN). Over residues 565–593 (NRNNFNGNGHRVNNQNNQRNRNSSYPRNN) the composition is skewed to low complexity.

Post-translationally, the N-terminus is blocked.

The protein resides in the nucleus. Its function is as follows. Binds specifically to parallel G4-DNA, a four-stranded structure stabilized by tetrads of hydrogen-bonded guanines. In Tetrahymena thermophila, this protein is G-quartet DNA-binding protein TGP1 (TGP1).